A 130-amino-acid chain; its full sequence is Large ribosomal subunit protein bL17 (130 aa).

It belongs to the bacterial ribosomal protein bL17 family. In terms of assembly, part of the 50S ribosomal subunit. Contacts protein L32.

The sequence is that of Large ribosomal subunit protein bL17 from Shewanella loihica (strain ATCC BAA-1088 / PV-4).